Reading from the N-terminus, the 379-residue chain is UDP-4-amino-4-deoxy-L-arabinose--oxoglutarate aminotransferase (379 aa).

Residue K182 is modified to N6-(pyridoxal phosphate)lysine.

The protein belongs to the DegT/DnrJ/EryC1 family. ArnB subfamily. Homodimer. Pyridoxal 5'-phosphate is required as a cofactor.

The catalysed reaction is UDP-4-amino-4-deoxy-beta-L-arabinose + 2-oxoglutarate = UDP-beta-L-threo-pentopyranos-4-ulose + L-glutamate. The protein operates within nucleotide-sugar biosynthesis; UDP-4-deoxy-4-formamido-beta-L-arabinose biosynthesis; UDP-4-deoxy-4-formamido-beta-L-arabinose from UDP-alpha-D-glucuronate: step 2/3. It functions in the pathway bacterial outer membrane biogenesis; lipopolysaccharide biosynthesis. Its function is as follows. Catalyzes the conversion of UDP-4-keto-arabinose (UDP-Ara4O) to UDP-4-amino-4-deoxy-L-arabinose (UDP-L-Ara4N). The modified arabinose is attached to lipid A and is required for resistance to polymyxin and cationic antimicrobial peptides. The sequence is that of UDP-4-amino-4-deoxy-L-arabinose--oxoglutarate aminotransferase from Enterobacter sp. (strain 638).